Here is a 119-residue protein sequence, read N- to C-terminus: Acidic phospholipase A2 E (119 aa).

7 disulfide bridges follow: Cys11–Cys71, Cys26–Cys118, Cys28–Cys44, Cys43–Cys99, Cys50–Cys92, Cys60–Cys85, and Cys78–Cys90. 3 residues coordinate Ca(2+): Tyr27, Gly29, and Gly31. His47 is an active-site residue. Position 48 (Asp48) interacts with Ca(2+). Asp93 is a catalytic residue.

The protein belongs to the phospholipase A2 family. Group I subfamily. D49 sub-subfamily. It depends on Ca(2+) as a cofactor. Expressed by the venom gland.

Its subcellular location is the secreted. It catalyses the reaction a 1,2-diacyl-sn-glycero-3-phosphocholine + H2O = a 1-acyl-sn-glycero-3-phosphocholine + a fatty acid + H(+). Functionally, PLA2 catalyzes the calcium-dependent hydrolysis of the 2-acyl groups in 3-sn-phosphoglycerides. The protein is Acidic phospholipase A2 E of Naja oxiana (Central Asian cobra).